The following is a 385-amino-acid chain: 8-amino-7-oxononanoate synthase (385 aa).

R21 serves as a coordination point for substrate. 108-109 (GF) serves as a coordination point for pyridoxal 5'-phosphate. Residue H133 participates in substrate binding. The pyridoxal 5'-phosphate site is built by S179, H207, and T233. K236 is subject to N6-(pyridoxal phosphate)lysine. A substrate-binding site is contributed by T352.

This sequence belongs to the class-II pyridoxal-phosphate-dependent aminotransferase family. BioF subfamily. In terms of assembly, homodimer. The cofactor is pyridoxal 5'-phosphate.

It carries out the reaction 6-carboxyhexanoyl-[ACP] + L-alanine + H(+) = (8S)-8-amino-7-oxononanoate + holo-[ACP] + CO2. The protein operates within cofactor biosynthesis; biotin biosynthesis. Its function is as follows. Catalyzes the decarboxylative condensation of pimeloyl-[acyl-carrier protein] and L-alanine to produce 8-amino-7-oxononanoate (AON), [acyl-carrier protein], and carbon dioxide. The sequence is that of 8-amino-7-oxononanoate synthase from Salmonella paratyphi B (strain ATCC BAA-1250 / SPB7).